The chain runs to 954 residues: Glucosidase 2 subunit alpha (954 aa).

Positions 1 to 22 are cleaved as a signal peptide; sequence MVLLKWLVCQLVFFTAFSHAFT. N-linked (GlcNAc...) asparagine glycosylation is found at N114, N126, N142, N173, and N345. Catalysis depends on D537, which acts as the Nucleophile. E540 is a catalytic residue. D614 functions as the Proton donor in the catalytic mechanism. 6 N-linked (GlcNAc...) asparagine glycosylation sites follow: N783, N791, N867, N880, N907, and N941.

Belongs to the glycosyl hydrolase 31 family. As to quaternary structure, heterodimer of a catalytic subunit alpha (ROT2) and a subunit beta (GTB1).

Its subcellular location is the endoplasmic reticulum. The enzyme catalyses N(4)-(alpha-D-Glc-(1-&gt;3)-alpha-D-Man-(1-&gt;2)-alpha-D-Man-(1-&gt;2)-alpha-D-Man-(1-&gt;3)-[alpha-D-Man-(1-&gt;2)-alpha-D-Man-(1-&gt;3)-[alpha-D-Man-(1-&gt;2)-alpha-D-Man-(1-&gt;6)]-alpha-D-Man-(1-&gt;6)]-beta-D-Man-(1-&gt;4)-beta-D-GlcNAc-(1-&gt;4)-beta-D-GlcNAc)-L-asparaginyl-[protein] + H2O = N(4)-(alpha-D-Man-(1-&gt;2)-alpha-D-Man-(1-&gt;2)-alpha-D-Man-(1-&gt;3)-[alpha-D-Man-(1-&gt;2)-alpha-D-Man-(1-&gt;3)-[alpha-D-Man-(1-&gt;2)-alpha-D-Man-(1-&gt;6)]-alpha-D-Man-(1-&gt;6)]-beta-D-Man-(1-&gt;4)-beta-D-GlcNAc-(1-&gt;4)-beta-D-GlcNAc)-L-asparaginyl-[protein] (N-glucan mannose isomer 9A1,2,3B1,2,3) + beta-D-glucose. It carries out the reaction N(4)-(alpha-D-Glc-(1-&gt;3)-alpha-D-Glc-(1-&gt;3)-alpha-D-Man-(1-&gt;2)-alpha-D-Man-(1-&gt;2)-alpha-D-Man-(1-&gt;3)-[alpha-D-Man-(1-&gt;2)-alpha-D-Man-(1-&gt;3)-[alpha-D-Man-(1-&gt;2)-alpha-D-Man-(1-&gt;6)]-alpha-D-Man-(1-&gt;6)]-beta-D-Man-(1-&gt;4)-beta-D-GlcNAc-(1-&gt;4)-beta-D-GlcNAc)-L-asparaginyl-[protein] + H2O = N(4)-(alpha-D-Glc-(1-&gt;3)-alpha-D-Man-(1-&gt;2)-alpha-D-Man-(1-&gt;2)-alpha-D-Man-(1-&gt;3)-[alpha-D-Man-(1-&gt;2)-alpha-D-Man-(1-&gt;3)-[alpha-D-Man-(1-&gt;2)-alpha-D-Man-(1-&gt;6)]-alpha-D-Man-(1-&gt;6)]-beta-D-Man-(1-&gt;4)-beta-D-GlcNAc-(1-&gt;4)-beta-D-GlcNAc)-L-asparaginyl-[protein] + beta-D-glucose. It functions in the pathway glycan metabolism; N-glycan metabolism. Its activity is regulated as follows. Inhibited by glucose, maltose and nigerose, and by the antibiotic deoxynojirimycin. Functionally, catalytic subunit of glucosidase 2, which cleaves sequentially the 2 innermost alpha-1,3-linked glucose residues from the Glc(2)Man(9)GlcNAc(2) oligosaccharide precursor of immature glycoproteins. The chain is Glucosidase 2 subunit alpha (ROT2) from Saccharomyces cerevisiae (strain ATCC 204508 / S288c) (Baker's yeast).